Consider the following 528-residue polypeptide: MNSFKWGKKIILFCLIVSLMGGIGVSCSFNKIKDSVKQKIDSMGDKGTYGVSASHPLAVEEGMKVLKNGGSAVDAAIVVSYVLGVVELHASGIGGGGGMLIISKDKETFIDYRETTPYFTGNQKPHIGVPGFVAGMEYIHDNYGSLPMGELLQPAINYAEKGFKVDDSLTMRLDLAKPRIYSDKLSIFYPNGEPIETGETLIQTDLARTLKKIQKEGAKGFYEGGVARAISKTAKISLEDIKGYKVEVRKPVKGNYMGYDVYTAPPPFSGVTLLQMLKLAEKKEVYKDVDHTATYMSKMEEISRIAYQDRKKNLGDPNYVNMDPNKMVSDKYISTMKNENGDALSEAEHESTTHFVIIDRDGTVVSSTNTLSNFFGTGKYTAGFFLNNQLQNFGSEGFNSYEPGKRSRTFMAPTVLKKDGETIGIGSPGGNRIPQILTPILDKYTHGKGSLQDIINEYRFTFEKNTAYTEIQLSSEVKNELSRKGLNVKKKVSPAFFGGVQALIKDERDNVITGAGDGRRNGTWKSNK.

The signal sequence occupies residues 1–26; it reads MNSFKWGKKIILFCLIVSLMGGIGVS. Thr-352 functions as the Nucleophile in the catalytic mechanism. Poly-gamma-D-glutamate contacts are provided by residues Thr-352, 429–432, and Arg-520; that span reads GGNR.

This sequence belongs to the gamma-glutamyltransferase family. In terms of assembly, this enzyme consists of two polypeptide chains, which are synthesized in precursor form from a single polypeptide. In terms of processing, cleaved by autocatalysis into a large and a small subunit.

It participates in capsule biogenesis; capsule polysaccharide biosynthesis. In terms of biological role, transpeptidase that cleaves the poly-gamma-D-glutamate capsule and catalyzes the formation of an amide bond with the side-chain amino group of meso-diaminopimelic acid (m-DAP) in the peptidoglycan scaffold. Degradation of the high-molecular weight capsule (H-capsule) to the lower-molecular weight capsule (L-capsule), which is released from the bacterial cell surface. The production of L-capsule is essential to mediate escape from host defenses. The sequence is that of Capsule biosynthesis protein CapD proenzyme (capD) from Bacillus anthracis.